The chain runs to 955 residues: Probable autotransporter YcgV (955 aa).

The tract at residues 616-659 (ASGTVPEPTPNPEPTPAPAQPPIVNPDPTPEPAPTPKPTTTADA) is disordered. Positions 622–652 (EPTPNPEPTPAPAQPPIVNPDPTPEPAPTPK) are enriched in pro residues. An Autotransporter domain is found at 687 to 955 (NQSKDGNIWL…QVNGGYRFSF (269 aa)).

Its function is as follows. Upon overexpression shows increased adherence to polyvinyl chloride (PVC) plates, increased mature biofilm formation. This Escherichia coli (strain K12) protein is Probable autotransporter YcgV (ycgV).